We begin with the raw amino-acid sequence, 455 residues long: Kynurenine 3-monooxygenase (455 aa).

The protein belongs to the aromatic-ring hydroxylase family. KMO subfamily. It depends on FAD as a cofactor.

It carries out the reaction L-kynurenine + NADPH + O2 + H(+) = 3-hydroxy-L-kynurenine + NADP(+) + H2O. The protein operates within cofactor biosynthesis; NAD(+) biosynthesis; quinolinate from L-kynurenine: step 1/3. Functionally, catalyzes the hydroxylation of L-kynurenine (L-Kyn) to form 3-hydroxy-L-kynurenine (L-3OHKyn). Required for synthesis of quinolinic acid. The sequence is that of Kynurenine 3-monooxygenase from Xanthomonas euvesicatoria pv. vesicatoria (strain 85-10) (Xanthomonas campestris pv. vesicatoria).